The following is a 329-amino-acid chain: Cytosolic arginine sensor for mTORC1 subunit 2 (329 aa).

ACT domains are found at residues 72–140 (ADAT…HTLS) and 262–322 (ELWK…HALK).

It belongs to the GATS family. As to quaternary structure, forms homodimers and heterodimers with CASTOR1. Interacts with the GATOR2 complex which is composed of MIOS, SEC13, SEH1L, WDR24 and WDR59; the interaction is not regulated by arginine.

The protein resides in the cytoplasm. It localises to the cytosol. Its function is as follows. Functions as a negative regulator of the TORC1 signaling pathway through the GATOR complex. As part of homodimers or heterodimers with CASTOR1, directly binds and inhibits the GATOR subcomplex GATOR2 and thereby mTORC1. Does not directly bind arginine, but binding of arginine to CASTOR1 disrupts the interaction of CASTOR2-containing heterodimers with GATOR2 which can in turn activate mTORC1 and the TORC1 signaling pathway. The chain is Cytosolic arginine sensor for mTORC1 subunit 2 from Mus musculus (Mouse).